The primary structure comprises 264 residues: B3-hordein (264 aa).

Residues 1-15 show a composition bias toward low complexity; sequence QQPVSRQPQQIIPQQ. The disordered stretch occupies residues 1–66; sequence QQPVSRQPQQ…QQPFPQQPPF (66 aa). Pro residues-rich tracts occupy residues 16-44 and 52-64; these read PQQP…PYPQ and QPFP…PQQP.

Belongs to the gliadin/glutenin family. Developing endosperm.

In terms of biological role, sulfur-rich seed storage protein. This is B3-hordein from Hordeum vulgare (Barley).